Reading from the N-terminus, the 172-residue chain is MSEKDKKELTQECEELKEKYKELEEYAKRLKAEYENYREEVAREKRELIKNANEYLILKLIPVLDDFERALNQGEKRDAFYEGVKMIYKKLLNVLEKEGLTKIHVGEKFDPFEHEAVERVETEDVEEYTVLEVVESGYKFHGKVLKPAKVKVAVKPRKKEAEKVEKPSDEKE.

The protein belongs to the GrpE family. Homodimer.

The protein resides in the cytoplasm. Functionally, participates actively in the response to hyperosmotic and heat shock by preventing the aggregation of stress-denatured proteins, in association with DnaK and GrpE. It is the nucleotide exchange factor for DnaK and may function as a thermosensor. Unfolded proteins bind initially to DnaJ; upon interaction with the DnaJ-bound protein, DnaK hydrolyzes its bound ATP, resulting in the formation of a stable complex. GrpE releases ADP from DnaK; ATP binding to DnaK triggers the release of the substrate protein, thus completing the reaction cycle. Several rounds of ATP-dependent interactions between DnaJ, DnaK and GrpE are required for fully efficient folding. This is Protein GrpE from Thermotoga petrophila (strain ATCC BAA-488 / DSM 13995 / JCM 10881 / RKU-1).